We begin with the raw amino-acid sequence, 607 residues long: UvrABC system protein C (607 aa).

Residues 16-94 (GRPGVYRMFD…IKEWRPPYNI (79 aa)) enclose the GIY-YIG domain. The 36-residue stretch at 203-238 (NALSDELNASMEKAAMALDFERAAELRDQVALLRRV) folds into the UVR domain.

Belongs to the UvrC family. In terms of assembly, interacts with UvrB in an incision complex.

It is found in the cytoplasm. Its function is as follows. The UvrABC repair system catalyzes the recognition and processing of DNA lesions. UvrC both incises the 5' and 3' sides of the lesion. The N-terminal half is responsible for the 3' incision and the C-terminal half is responsible for the 5' incision. This Pseudomonas syringae pv. syringae (strain B728a) protein is UvrABC system protein C.